The primary structure comprises 473 residues: Ribulose bisphosphate carboxylase large chain (473 aa).

Substrate is bound by residues Asn-116 and Thr-166. Lys-168 (proton acceptor) is an active-site residue. Lys-170 is a binding site for substrate. Mg(2+) is bound by residues Lys-194, Asp-196, and Glu-197. Lys-194 bears the N6-carboxylysine mark. Residue His-287 is the Proton acceptor of the active site. Substrate is bound by residues Arg-288, His-320, and Ser-372.

This sequence belongs to the RuBisCO large chain family. Type I subfamily. As to quaternary structure, heterohexadecamer of 8 large chains and 8 small chains. In R.sphaeroides the complex is approximately 500 kDa. It depends on Mg(2+) as a cofactor.

It carries out the reaction 2 (2R)-3-phosphoglycerate + 2 H(+) = D-ribulose 1,5-bisphosphate + CO2 + H2O. The catalysed reaction is D-ribulose 1,5-bisphosphate + O2 = 2-phosphoglycolate + (2R)-3-phosphoglycerate + 2 H(+). Its function is as follows. RuBisCO catalyzes two reactions: the carboxylation of D-ribulose 1,5-bisphosphate, the primary event in carbon dioxide fixation, as well as the oxidative fragmentation of the pentose substrate. Both reactions occur simultaneously and in competition at the same active site. This Thiobacillus denitrificans (strain ATCC 25259 / T1) protein is Ribulose bisphosphate carboxylase large chain.